The primary structure comprises 547 residues: Chaperonin GroEL 1 (547 aa).

Residues 30 to 33 (TLGP), lysine 51, 87 to 91 (DGTTT), glycine 415, and aspartate 495 each bind ATP.

Belongs to the chaperonin (HSP60) family. Forms a cylinder of 14 subunits composed of two heptameric rings stacked back-to-back. Interacts with the co-chaperonin GroES.

It is found in the cytoplasm. The enzyme catalyses ATP + H2O + a folded polypeptide = ADP + phosphate + an unfolded polypeptide.. Functionally, together with its co-chaperonin GroES, plays an essential role in assisting protein folding. The GroEL-GroES system forms a nano-cage that allows encapsulation of the non-native substrate proteins and provides a physical environment optimized to promote and accelerate protein folding. The polypeptide is Chaperonin GroEL 1 (Rhizobium johnstonii (strain DSM 114642 / LMG 32736 / 3841) (Rhizobium leguminosarum bv. viciae)).